Here is a 260-residue protein sequence, read N- to C-terminus: Proansamycin X synthase (260 aa).

C73 functions as the Acyl-thioester intermediate in the catalytic mechanism. Catalysis depends on residues H111 and D126.

The protein belongs to the arylamine N-acetyltransferase family.

Its pathway is antibiotic biosynthesis; rifamycin B biosynthesis. Its function is as follows. Catalyzes the release of the completed linear polyketide from the rif PKS by forming an intramolecular amide bond, in this way terminating polyketide assembly and forming the macrocyclic compound proansamycin X, an intermediate in the rifamycin B biosynthesis. In Amycolatopsis mediterranei (strain S699) (Nocardia mediterranei), this protein is Proansamycin X synthase (rifF).